Reading from the N-terminus, the 151-residue chain is MFRGANAINLDAKGRLAMPSRYRDELDSRSAGQLIVTIDAVDPCLCLYPLSEWELIEAKLRDLATFREENRRLQRLLIGNAVDLELDGSGRFLVPPRLREYAKLDKRVMLVGQLNKFQLWDEDAWNALADADLAAIQKPGAMPDELRDLIL.

2 SpoVT-AbrB domains span residues 5–52 and 81–124; these read ANAI…PLSE and AVDL…DEDA.

It belongs to the MraZ family. As to quaternary structure, forms oligomers.

It is found in the cytoplasm. The protein resides in the nucleoid. This is Transcriptional regulator MraZ from Pseudomonas syringae pv. syringae (strain B728a).